A 301-amino-acid polypeptide reads, in one-letter code: Dihydroorotate dehydrogenase B (NAD(+)), catalytic subunit (301 aa).

Substrate-binding positions include Lys44, 68–72 (NAMGL), and Asn122. Residue 44 to 45 (KS) participates in FMN binding. Asn122 lines the FMN pocket. Residue Cys125 is the Nucleophile of the active site. The FMN site is built by Lys160 and Ile186. 187–188 (NT) is a substrate binding site. FMN is bound by residues Gly212, 238-239 (GG), and 260-261 (GS).

This sequence belongs to the dihydroorotate dehydrogenase family. Type 1 subfamily. In terms of assembly, heterotetramer of 2 PyrK and 2 PyrD type B subunits. It depends on FMN as a cofactor.

The protein resides in the cytoplasm. The catalysed reaction is (S)-dihydroorotate + NAD(+) = orotate + NADH + H(+). Its pathway is pyrimidine metabolism; UMP biosynthesis via de novo pathway; orotate from (S)-dihydroorotate (NAD(+) route): step 1/1. Catalyzes the conversion of dihydroorotate to orotate with NAD(+) as electron acceptor. The sequence is that of Dihydroorotate dehydrogenase B (NAD(+)), catalytic subunit (pyrD) from Methanocella arvoryzae (strain DSM 22066 / NBRC 105507 / MRE50).